The following is a 152-amino-acid chain: Large ribosomal subunit protein bL9 (152 aa).

It belongs to the bacterial ribosomal protein bL9 family.

Functionally, binds to the 23S rRNA. The sequence is that of Large ribosomal subunit protein bL9 from Synechococcus sp. (strain WH7803).